Here is a 218-residue protein sequence, read N- to C-terminus: Oxidoreductase claN (218 aa).

The NADP(+) site is built by K38, D57, and N82. Residue S134 is the Proton donor of the active site. NADP(+) is bound by residues Y148, K152, and T183. Catalysis depends on Y148, which acts as the Proton acceptor. K152 serves as the catalytic Lowers pKa of active site Tyr.

Belongs to the short-chain dehydrogenases/reductases (SDR) family.

It participates in pigment biosynthesis. Oxidoreductase; part of the gene cluster that mediates the biosynthesis of the bianthraquinone cladofulvin, a conidial pigment not required for virulence but that plays a role in fitness and resistance to environmental stresses including UV light and low-temperature stress. The pathway begins with the synthesis of atrochrysone thioester by the polyketide synthase (PKS) claG. The atrochrysone carboxyl ACP thioesterase claF then breaks the thioester bond and releases the atrochrysone carboxylic acid from claG. This compound is decarboxylated by claH to yield emodin, which is further converted to chrysophanol hydroquinone by the reductase claC and the dehydratase claB. The cytochrome P450 monooxygenase claM then catalyzes the dimerization of nataloe-emodin to cladofulvin. The polypeptide is Oxidoreductase claN (Passalora fulva (Tomato leaf mold)).